Consider the following 94-residue polypeptide: Co-chaperonin GroES (94 aa).

It belongs to the GroES chaperonin family. In terms of assembly, heptamer of 7 subunits arranged in a ring. Interacts with the chaperonin GroEL.

It is found in the cytoplasm. In terms of biological role, together with the chaperonin GroEL, plays an essential role in assisting protein folding. The GroEL-GroES system forms a nano-cage that allows encapsulation of the non-native substrate proteins and provides a physical environment optimized to promote and accelerate protein folding. GroES binds to the apical surface of the GroEL ring, thereby capping the opening of the GroEL channel. This chain is Co-chaperonin GroES, found in Bacillus licheniformis (strain ATCC 14580 / DSM 13 / JCM 2505 / CCUG 7422 / NBRC 12200 / NCIMB 9375 / NCTC 10341 / NRRL NRS-1264 / Gibson 46).